We begin with the raw amino-acid sequence, 288 residues long: Bifunctional protein FolD 2 (288 aa).

NADP(+)-binding positions include 166–168 (GRS) and serine 191.

Belongs to the tetrahydrofolate dehydrogenase/cyclohydrolase family. As to quaternary structure, homodimer.

The catalysed reaction is (6R)-5,10-methylene-5,6,7,8-tetrahydrofolate + NADP(+) = (6R)-5,10-methenyltetrahydrofolate + NADPH. It catalyses the reaction (6R)-5,10-methenyltetrahydrofolate + H2O = (6R)-10-formyltetrahydrofolate + H(+). Its pathway is one-carbon metabolism; tetrahydrofolate interconversion. Its function is as follows. Catalyzes the oxidation of 5,10-methylenetetrahydrofolate to 5,10-methenyltetrahydrofolate and then the hydrolysis of 5,10-methenyltetrahydrofolate to 10-formyltetrahydrofolate. The sequence is that of Bifunctional protein FolD 2 from Frankia alni (strain DSM 45986 / CECT 9034 / ACN14a).